A 385-amino-acid chain; its full sequence is MYKTKGGFQLTLQTLSLVVGFMAWSIISPLMPYISQDVKVNPGQLSIILAIPVILGSILRVPFGYLTNIIGAKWVFFCSFVILLFPIFFLGQAQTPGMLMLSGFFLGVGGAIFSVGVTSVPKYFSKDKVGLANGIYGMGNIGTAVSSFLAPPIAGIIGWQTTVRSYLIIIAIFAILMFIFGDKNEPKVKVPLASQFKKLSSNYKLYYLSLWYFITFGAFVAFGLFLPNYLVNNFGIDKVDAGIRSGVFIALATFLRPIGGILGDKFNAVKVLMIDFIIMIVGAVILGISSHIALFTIGCLTISICAGLGNGLIFKLVPSYFAKESGAANGIVSMMGGLGGFFPPLVITYVTGLTGSSHLAFILLAIFGVLAFITMGHLYKKEYAK.

The next 12 helical transmembrane spans lie at 14–34 (TLSL…MPYI), 47–67 (IILA…GYLT), 69–89 (IIGA…PIFF), 97–117 (GMLM…SVGV), 139–159 (GNIG…IIGW), 161–181 (TTVR…FIFG), 205–225 (LYYL…FGLF), 246–266 (GVFI…GDKF), 277–297 (IIMI…LFTI), 302–322 (ISIC…SYFA), 330–350 (GIVS…ITYV), and 359–379 (LAFI…GHLY).

Belongs to the major facilitator superfamily. Nitrate/nitrite porter (TC 2.A.1.8) family.

It localises to the cell membrane. Its function is as follows. Probably required for nitrate uptake under anoxic conditions. Also possibly involved in excretion of nitrite produced by the dissimilatory reduction of nitrate. This Staphylococcus haemolyticus (strain JCSC1435) protein is Probable nitrate transporter NarT (narT).